The primary structure comprises 309 residues: Oxygen-dependent coproporphyrinogen-III oxidase (309 aa).

Serine 100 provides a ligand contact to substrate. 2 residues coordinate a divalent metal cation: histidine 104 and histidine 114. Catalysis depends on histidine 114, which acts as the Proton donor. 116 to 118 is a binding site for substrate; sequence NVR. 2 residues coordinate a divalent metal cation: histidine 153 and histidine 183. The tract at residues 248 to 283 is important for dimerization; it reads YAEFNLVYDRGTLFGLQSGGRTESILMSLPPIVHWE. Position 266–268 (266–268) interacts with substrate; that stretch reads GGR.

It belongs to the aerobic coproporphyrinogen-III oxidase family. In terms of assembly, homodimer. Requires a divalent metal cation as cofactor.

The protein localises to the cytoplasm. The catalysed reaction is coproporphyrinogen III + O2 + 2 H(+) = protoporphyrinogen IX + 2 CO2 + 2 H2O. Its pathway is porphyrin-containing compound metabolism; protoporphyrin-IX biosynthesis; protoporphyrinogen-IX from coproporphyrinogen-III (O2 route): step 1/1. Involved in the heme biosynthesis. Catalyzes the aerobic oxidative decarboxylation of propionate groups of rings A and B of coproporphyrinogen-III to yield the vinyl groups in protoporphyrinogen-IX. The chain is Oxygen-dependent coproporphyrinogen-III oxidase from Legionella pneumophila (strain Lens).